The primary structure comprises 193 residues: uncharacterized protein (193 aa).

Positions 1–144 are disordered; sequence MEKKRTLSVN…NNNNNNEGTI (144 aa). The segment covering 29 to 86 has biased composition (low complexity); sequence NSLNNIENNECNNNNNNNNNNNNNNSNSNNLNNSNNNNINTSSNSINSSNSINNSIDN. Positions 103–118 are enriched in polar residues; the sequence is KMNSSQEFQSYLTPNK. The segment covering 119 to 140 has biased composition (low complexity); it reads NNNNRNNNNRNNNNNNNNNNNN. A helical membrane pass occupies residues 158 to 180; that stretch reads YMIRPFLVGASASFGISIGMFYF.

The protein resides in the membrane. This is an uncharacterized protein from Dictyostelium discoideum (Social amoeba).